The chain runs to 43 residues: Protein PsbN (43 aa).

A helical membrane pass occupies residues 3–23 (IATLVAIFISGLLVSFTGYAL).

This sequence belongs to the PsbN family.

Its subcellular location is the plastid. The protein resides in the chloroplast thylakoid membrane. In terms of biological role, may play a role in photosystem I and II biogenesis. This Euonymus alatus (Burning bush) protein is Protein PsbN.